The sequence spans 91 residues: Large ribosomal subunit protein bL31B (91 aa).

This sequence belongs to the bacterial ribosomal protein bL31 family. Type B subfamily. In terms of assembly, part of the 50S ribosomal subunit.

The protein is Large ribosomal subunit protein bL31B of Neisseria meningitidis serogroup A / serotype 4A (strain DSM 15465 / Z2491).